The following is a 673-amino-acid chain: Annexin A6 (673 aa).

Ala-2 carries the N-acetylalanine modification. The residue at position 13 (Ser-13) is a Phosphoserine. Annexin repeat units lie at residues Phe-20 to Arg-91, Pro-92 to Gln-163, Asp-175 to Lys-247, Ser-251 to Gly-322, Phe-363 to Met-434, Pro-435 to Thr-506, Glu-521 to Gln-595, and Asn-599 to Gly-670. Phosphotyrosine is present on Tyr-30. N6-acetyllysine occurs at positions 63, 68, 75, and 81. Tyr-201 carries the phosphotyrosine modification. Lys-306, Lys-370, and Lys-418 each carry N6-acetyllysine. Ser-422 is modified (phosphoserine). At Lys-483 the chain carries N6-acetyllysine. Ser-537 carries the phosphoserine modification. Lys-620 is subject to N6-acetyllysine.

This sequence belongs to the annexin family. Phosphorylated in response to growth factor stimulation.

It is found in the cytoplasm. It localises to the melanosome. In terms of biological role, may associate with CD21. May regulate the release of Ca(2+) from intracellular stores. The sequence is that of Annexin A6 (ANXA6) from Bos taurus (Bovine).